Consider the following 1447-residue polypeptide: Regulator of G-protein signaling 12 (1447 aa).

The tract at residues 1–21 (MFRAGEASKRPLPGPSPPRVR) is disordered. Positions 22 to 98 (SVEVARGRAG…GVLHMVIAEG (77 aa)) constitute a PDZ domain. 2 positions are modified to phosphoserine: Ser-172 and Ser-195. Residue Lys-196 forms a Glycyl lysine isopeptide (Lys-Gly) (interchain with G-Cter in SUMO2) linkage. A PID domain is found at 228–340 (VAMIVGYLGS…GALRTSCHVF (113 aa)). 2 disordered regions span residues 410-429 (ADAH…IGNF) and 443-482 (LGGS…DPEG). Positions 413 to 425 (HQNNSTSSNSDSG) are enriched in polar residues. Residues 451-464 (GPGGSAWDGVGGRG) are compositionally biased toward gly residues. Arg-524 and Arg-633 each carry omega-N-methylarginine. The segment at 618 to 652 (NVRKTKEDKKGSKFGRGTGLTQPSQRTSARRSFGR) is disordered. Residues Ser-661 and Ser-671 each carry the phosphoserine modification. The RGS domain occupies 715–832 (SFERLLQDPV…LKSPLYQECI (118 aa)). A compositionally biased stretch (polar residues) spans 843 to 853 (DSQQVPSSPAS). The interval 843-941 (DSQQVPSSPA…RESQGSVSSA (99 aa)) is disordered. Phosphoserine is present on residues Ser-850 and Ser-879. Basic and acidic residues predominate over residues 914-923 (EHGDHADDAL). Phosphoserine is present on Ser-943. RBD domains follow at residues 962 to 1032 (KHCC…LEKR) and 1034 to 1104 (LFRL…LEEK). Residues 1103–1117 (EKDPSRGKASADKQK) are compositionally biased toward basic and acidic residues. The interval 1103–1169 (EKDPSRGKAS…RDPRLSKREE (67 aa)) is disordered. The span at 1122–1136 (KQNTAVNSSSRNHSA) shows a compositional bias: polar residues. Over residues 1151 to 1169 (IKGENGKNARDPRLSKREE) the composition is skewed to basic and acidic residues. The GoLoco domain maps to 1187-1209 (AEEFFELISKAQSNRADDQRGLL). The disordered stretch occupies residues 1240–1447 (GFSKRSATGN…KTSAHHATFV (208 aa)). A compositionally biased stretch (polar residues) spans 1244–1258 (RSATGNGRESASQPG). Low complexity-rich tracts occupy residues 1267 to 1280 (SSDS…SASS) and 1289 to 1298 (PPGQKSPSGP). Residues 1301 to 1313 (TPQSPVSLAQEGT) are compositionally biased toward polar residues.

Interacts with GNAI1. Interacts with GNAI2 and GNAI3; the interactions are GDP-dependent. In terms of tissue distribution, isoform 3 is brain specific.

The protein localises to the nucleus. It localises to the cytoplasm. The protein resides in the cell projection. It is found in the dendrite. Its subcellular location is the synapse. The protein localises to the nucleus matrix. Functionally, regulates G protein-coupled receptor signaling cascades. Inhibits signal transduction by increasing the GTPase activity of G protein alpha subunits, thereby driving them into their inactive GDP-bound form. Behaves as a cell cycle-dependent transcriptional repressor, promoting inhibition of S-phase DNA synthesis. This chain is Regulator of G-protein signaling 12 (RGS12), found in Homo sapiens (Human).